Consider the following 89-residue polypeptide: Small ribosomal subunit protein uS15 (89 aa).

This sequence belongs to the universal ribosomal protein uS15 family. Part of the 30S ribosomal subunit. Forms a bridge to the 50S subunit in the 70S ribosome, contacting the 23S rRNA.

In terms of biological role, one of the primary rRNA binding proteins, it binds directly to 16S rRNA where it helps nucleate assembly of the platform of the 30S subunit by binding and bridging several RNA helices of the 16S rRNA. Its function is as follows. Forms an intersubunit bridge (bridge B4) with the 23S rRNA of the 50S subunit in the ribosome. In Bradyrhizobium sp. (strain BTAi1 / ATCC BAA-1182), this protein is Small ribosomal subunit protein uS15.